Consider the following 186-residue polypeptide: MIEMARLKEFYKKDVVTMMMKRFNYSSVMEVPRILKITLNMGVGEAVGDKKVMNHAIEDMTLISGQKPVVTKARKSIAGFKIREGWPIGCKVTLRRERMYEFLDRLISITLPRVRDFRGLNPKSFDGTGNYSMGIHEQIVFPEIDYDKTDGIRGLDICITTSAKTNEEAKALLEAFNLPLKDKDRK.

Belongs to the universal ribosomal protein uL5 family. Part of the 50S ribosomal subunit; part of the 5S rRNA/L5/L18/L25 subcomplex. Contacts the 5S rRNA and the P site tRNA. Forms a bridge to the 30S subunit in the 70S ribosome.

This is one of the proteins that bind and probably mediate the attachment of the 5S RNA into the large ribosomal subunit, where it forms part of the central protuberance. In the 70S ribosome it contacts protein S13 of the 30S subunit (bridge B1b), connecting the 2 subunits; this bridge is implicated in subunit movement. Contacts the P site tRNA; the 5S rRNA and some of its associated proteins might help stabilize positioning of ribosome-bound tRNAs. The protein is Large ribosomal subunit protein uL5 of Legionella pneumophila subsp. pneumophila (strain Philadelphia 1 / ATCC 33152 / DSM 7513).